The sequence spans 50 residues: Insulin-1 (50 aa).

Intrachain disulfides connect Cys7/Cys36, Cys19/Cys49, and Cys35/Cys40.

It belongs to the insulin family. As to quaternary structure, heterodimer of a B chain and an A chain linked by two disulfide bonds.

Its subcellular location is the secreted. In terms of biological role, insulin decreases blood glucose concentration. It increases cell permeability to monosaccharides, amino acids and fatty acids. It accelerates glycolysis, the pentose phosphate cycle, and glycogen synthesis in liver. This chain is Insulin-1, found in Thunnus orientalis (North Pacific bluefin tuna).